Reading from the N-terminus, the 128-residue chain is uncharacterized protein (128 aa).

The protein resides in the mitochondrion. This is an uncharacterized protein from Schizosaccharomyces pombe (strain 972 / ATCC 24843) (Fission yeast).